The following is a 448-amino-acid chain: Tryptophan--tRNA ligase (448 aa).

Residues 10 to 12 and 18 to 19 each bind ATP; these read TPT and GN. The 'HIGH' region signature appears at 11 to 19; sequence PTGTPHLGN. Position 143 (Asp143) interacts with L-tryptophan. ATP is bound by residues 155-157, Leu197, and 204-208; these read GRD and KMSKS. The 'KMSKS' region motif lies at 204–208; that stretch reads KMSKS.

This sequence belongs to the class-I aminoacyl-tRNA synthetase family. In terms of assembly, homodimer.

The protein localises to the cytoplasm. The catalysed reaction is tRNA(Trp) + L-tryptophan + ATP = L-tryptophyl-tRNA(Trp) + AMP + diphosphate + H(+). Catalyzes the attachment of tryptophan to tRNA(Trp). In Pseudomonas aeruginosa (strain ATCC 15692 / DSM 22644 / CIP 104116 / JCM 14847 / LMG 12228 / 1C / PRS 101 / PAO1), this protein is Tryptophan--tRNA ligase.